The primary structure comprises 394 residues: Protein-glutamate methylesterase/protein-glutamine glutaminase of group 2 operon (394 aa).

Residues 21 to 139 (RVMVVDDSAV…ELTGADTFKR (119 aa)) enclose the Response regulatory domain. D72 carries the 4-aspartylphosphate modification. The disordered stretch occupies residues 148–201 (LGAAARRSGPRREGTAAARPPGAAAQPTSGYTLPSPVRAKPETGPLTVRPLPPD). The segment covering 162–172 (TAAARPPGAAA) has biased composition (low complexity). The region spanning 200–382 (PDGRPDVIAI…SAILPLKEIG (183 aa)) is the CheB-type methylesterase domain. Active-site residues include S212, H238, and D334.

The protein belongs to the CheB family. In terms of processing, phosphorylated by CheA. Phosphorylation of the N-terminal regulatory domain activates the methylesterase activity.

The protein localises to the cytoplasm. The catalysed reaction is [protein]-L-glutamate 5-O-methyl ester + H2O = L-glutamyl-[protein] + methanol + H(+). The enzyme catalyses L-glutaminyl-[protein] + H2O = L-glutamyl-[protein] + NH4(+). Involved in chemotaxis. Part of a chemotaxis signal transduction system that modulates chemotaxis in response to various stimuli. Catalyzes the demethylation of specific methylglutamate residues introduced into the chemoreceptors (methyl-accepting chemotaxis proteins or MCP) by CheR. Also mediates the irreversible deamidation of specific glutamine residues to glutamic acid. The protein is Protein-glutamate methylesterase/protein-glutamine glutaminase of group 2 operon of Rhodospirillum centenum (strain ATCC 51521 / SW).